An 80-amino-acid polypeptide reads, in one-letter code: UPF0125 protein PD_1376 (80 aa).

The protein belongs to the UPF0125 (RnfH) family.

This chain is UPF0125 protein PD_1376, found in Xylella fastidiosa (strain Temecula1 / ATCC 700964).